The chain runs to 578 residues: Putative ankyrin repeat protein FPV022 (578 aa).

ANK repeat units lie at residues 4-34, 38-67, 68-97, 100-129, 160-189, 222-251, 255-287, 320-349, 353-382, 386-415, and 419-449; these read RRKSAFKRAIDEDDVDIIRKLLSYKPIDLNK, KNRTILCRAVSMKSHKVAEFLLSNGSKMSA, CKVPPLIISVRNKDLTMAKILVSYGASVDV, KGETPLLTAIKTGYIEIIDYLLSLEPSGPY, YGHTALYYAVKKGNLSLIKLLVENKAITDN, EGTTALHYAVEAERLEAVRYLLDIGCDPKV, HSVSPLYYAIKRKNKIILDELIKFYTVEFMVNM, YLSELLYESIKTNNPEIVSLILGLGANINK, YGNIPLQTAIIYQTDNVFNLLLQKGADVNA, DGNTILHTLAACCKYKKIKLVLDLGSDINS, and NGRTPIEEACPCKKTIRTLISHLIIMIKKNK.

The protein is Putative ankyrin repeat protein FPV022 of Fowlpox virus (strain NVSL) (FPV).